Here is a 525-residue protein sequence, read N- to C-terminus: Putative ribose/galactose/methyl galactoside import ATP-binding protein (525 aa).

Residues 1–30 are disordered; it reads MFGSATANPPAQRDLPSSDSDSPTPDAQPP. Low complexity predominate over residues 14–25; that stretch reads DLPSSDSDSPTP. ABC transporter domains lie at 33–269 and 279–523; these read LEIS…VGRE and KPPG…SGHK. 65–72 provides a ligand contact to ATP; that stretch reads GENGAGKS.

It belongs to the ABC transporter superfamily. Carbohydrate importer 2 (CUT2) (TC 3.A.1.2) family.

It localises to the cell inner membrane. It carries out the reaction D-ribose(out) + ATP + H2O = D-ribose(in) + ADP + phosphate + H(+). It catalyses the reaction D-galactose(out) + ATP + H2O = D-galactose(in) + ADP + phosphate + H(+). In terms of biological role, part of an ABC transporter complex involved in carbohydrate import. Could be involved in ribose, galactose and/or methyl galactoside import. Responsible for energy coupling to the transport system. The chain is Putative ribose/galactose/methyl galactoside import ATP-binding protein from Pseudomonas savastanoi pv. phaseolicola (strain 1448A / Race 6) (Pseudomonas syringae pv. phaseolicola (strain 1448A / Race 6)).